The primary structure comprises 692 residues: Methionine--tRNA ligase (692 aa).

The 'HIGH' region motif lies at 12 to 22 (PYANGSFHIGH). C143, C146, C156, and C159 together coordinate Zn(2+). Residues 341-345 (KMSKS) carry the 'KMSKS' region motif. K344 provides a ligand contact to ATP. One can recognise a tRNA-binding domain in the interval 586-692 (DFAKIDLRIA…PGAQPGMRVR (107 aa)).

The protein belongs to the class-I aminoacyl-tRNA synthetase family. MetG type 1 subfamily. Homodimer. Zn(2+) is required as a cofactor.

It localises to the cytoplasm. The catalysed reaction is tRNA(Met) + L-methionine + ATP = L-methionyl-tRNA(Met) + AMP + diphosphate. In terms of biological role, is required not only for elongation of protein synthesis but also for the initiation of all mRNA translation through initiator tRNA(fMet) aminoacylation. The chain is Methionine--tRNA ligase from Bordetella parapertussis (strain 12822 / ATCC BAA-587 / NCTC 13253).